Consider the following 467-residue polypeptide: 2-succinylbenzoate--CoA ligase (467 aa).

It belongs to the ATP-dependent AMP-binding enzyme family. MenE subfamily.

The catalysed reaction is 2-succinylbenzoate + ATP + CoA = 2-succinylbenzoyl-CoA + AMP + diphosphate. The protein operates within quinol/quinone metabolism; 1,4-dihydroxy-2-naphthoate biosynthesis; 1,4-dihydroxy-2-naphthoate from chorismate: step 5/7. It participates in quinol/quinone metabolism; menaquinone biosynthesis. Its function is as follows. Converts 2-succinylbenzoate (OSB) to 2-succinylbenzoyl-CoA (OSB-CoA). The chain is 2-succinylbenzoate--CoA ligase from Listeria monocytogenes serotype 4b (strain F2365).